Reading from the N-terminus, the 301-residue chain is ATP synthase F(0) complex subunit B1, mitochondrial (301 aa).

A mitochondrion-targeting transit peptide spans 1-21; sequence MSLSRLSSPQTFSRVFIVARG.

It belongs to the eukaryotic ATPase B chain family. In terms of assembly, subunit of the F-type ATPase which has 2 components, CF(1) - the catalytic core - and CF(0) - the membrane proton channel.

Its subcellular location is the mitochondrion. It is found in the mitochondrion inner membrane. Mitochondrial membrane ATP synthase (F(1)F(0) ATP synthase or Complex V) produces ATP from ADP in the presence of a proton gradient across the membrane which is generated by electron transport complexes of the respiratory chain. F-type ATPases consist of two structural domains, F(1) - containing the extramembraneous catalytic core, and F(0) - containing the membrane proton channel, linked together by a central stalk and a peripheral stalk. During catalysis, ATP synthesis in the catalytic domain of F(1) is coupled via a rotary mechanism of the central stalk subunits to proton translocation. Part of the complex F(0) domain and the peripheric stalk, which acts as a stator to hold the subunits of the catalytic subcomplexes relative to the rotary elements. Plays a role in germline development. This Caenorhabditis elegans protein is ATP synthase F(0) complex subunit B1, mitochondrial.